A 980-amino-acid polypeptide reads, in one-letter code: Vacuolar protein sorting-associated protein 11 homolog (980 aa).

Residues 407-554 (YKETIGMLEP…GRDLLIHARD (148 aa)) form a CHCR repeat. The RING-type; atypical zinc finger occupies 803–843 (CSACDTPLQLPTVHFLCKHAYHVHCFESYNMDGSDKCPACQ). Over residues 886–898 (TKKTKKSEAKKDP) the composition is skewed to basic and acidic residues. A disordered region spans residues 886–980 (TKKTKKSEAK…APAPSTNPFD (95 aa)). Composition is skewed to polar residues over residues 917-937 (TTIS…SRQR) and 947-960 (TNPF…TRLS).

This sequence belongs to the VPS11 family. Probable core component of at least two putative endosomal tethering complexes, the homotypic fusion and vacuole protein sorting (HOPS) complex and the class C core vacuole/endosome tethering (CORVET) complex. Their common core is composed of the class C Vps proteins vps-11, vps-16 and vps-18, which in HOPS further associates with vps-33.1, vps-39 and vps-41 and in CORVET with vps-8 and vps-33.2.

It is found in the late endosome membrane. It localises to the lysosome membrane. Functionally, plays a role in vesicle-mediated protein trafficking to lysosomal compartments including the endocytic membrane transport pathways. Believed to act as a core component of the putative HOPS and CORVET endosomal tethering complexes which are proposed to be involved in the rab-5-to-rab-7 endosome conversion probably implicating sand-1, and via binding SNAREs and SNARE complexes to mediate tethering and docking events during SNARE-mediated membrane fusion. The HOPS complex is proposed to be recruited to Rab7 on the late endosomal membrane and to regulate late endocytic, phagocytic and autophagic traffic towards lysosomes. Within the HOPS complex, contributes to the normal development of gut granules in embryonic and adult intestinal cells. The CORVET complex is proposed to function as a Rab5 effector to mediate early endosome fusion probably in specific endosome subpopulations. Required for fusion of endosomes and autophagosomes with lysosomes. Involved in cargo transport from early to late endosomes and required for the transition from early to late endosomes. Possibly has a role in clearance of apoptotic cells during programmed cell death. This is Vacuolar protein sorting-associated protein 11 homolog from Caenorhabditis elegans.